A 339-amino-acid chain; its full sequence is tRNA N6-adenosine threonylcarbamoyltransferase (339 aa).

Histidine 112 and histidine 116 together coordinate Fe cation. Substrate-binding positions include 135-139 (LVSGG), aspartate 168, glycine 181, and asparagine 273. Residue aspartate 301 coordinates Fe cation.

It belongs to the KAE1 / TsaD family. Requires Fe(2+) as cofactor.

It localises to the cytoplasm. The catalysed reaction is L-threonylcarbamoyladenylate + adenosine(37) in tRNA = N(6)-L-threonylcarbamoyladenosine(37) in tRNA + AMP + H(+). Required for the formation of a threonylcarbamoyl group on adenosine at position 37 (t(6)A37) in tRNAs that read codons beginning with adenine. Is involved in the transfer of the threonylcarbamoyl moiety of threonylcarbamoyl-AMP (TC-AMP) to the N6 group of A37, together with TsaE and TsaB. TsaD likely plays a direct catalytic role in this reaction. The protein is tRNA N6-adenosine threonylcarbamoyltransferase of Coxiella burnetii (strain RSA 493 / Nine Mile phase I).